The sequence spans 366 residues: Phospho-N-acetylmuramoyl-pentapeptide-transferase (366 aa).

A run of 10 helical transmembrane segments spans residues 3–23 (QIIIAGAVGLLVSIFVTPVLI), 52–72 (MGGIAILIGITVAYAVTGIVG), 80–100 (LTASGLLVLGLTLALGGLGFA), 120–140 (LIGQLAISLIFGALILLFPNA), 161–181 (LAIGPKAVGIAIFLLFIYILI), 197–217 (LAAGSTAIVMGTYTVITFWQF), 238–258 (LAILAAAGLGACLGFLWWNAA), 262–282 (IFMGDTGSLALGGLVAGLSVA), 287–307 (LLMIIVGALFVLEAASVVIQV), and 341–361 (FWLIAAVAALIGASIFYGEWL).

The protein belongs to the glycosyltransferase 4 family. MraY subfamily. Mg(2+) serves as cofactor.

It is found in the cell membrane. It catalyses the reaction UDP-N-acetyl-alpha-D-muramoyl-L-alanyl-gamma-D-glutamyl-meso-2,6-diaminopimeloyl-D-alanyl-D-alanine + di-trans,octa-cis-undecaprenyl phosphate = di-trans,octa-cis-undecaprenyl diphospho-N-acetyl-alpha-D-muramoyl-L-alanyl-D-glutamyl-meso-2,6-diaminopimeloyl-D-alanyl-D-alanine + UMP. It functions in the pathway cell wall biogenesis; peptidoglycan biosynthesis. Functionally, catalyzes the initial step of the lipid cycle reactions in the biosynthesis of the cell wall peptidoglycan: transfers peptidoglycan precursor phospho-MurNAc-pentapeptide from UDP-MurNAc-pentapeptide onto the lipid carrier undecaprenyl phosphate, yielding undecaprenyl-pyrophosphoryl-MurNAc-pentapeptide, known as lipid I. This Corynebacterium diphtheriae (strain ATCC 700971 / NCTC 13129 / Biotype gravis) protein is Phospho-N-acetylmuramoyl-pentapeptide-transferase.